The sequence spans 491 residues: NADH-ubiquinone oxidoreductase chain 4 (491 aa).

The next 14 membrane-spanning stretches (helical) occupy residues 2 to 22, 37 to 57, 89 to 109, 114 to 134, 139 to 159, 169 to 189, 215 to 235, 245 to 265, 271 to 291, 308 to 328, 332 to 352, 372 to 392, 412 to 432, and 457 to 477; these read IFHK…IINV, ALEW…AFDM, ISLF…LISW, FLLK…MGVF, LLLF…LIGV, ASYY…LGIF, WIFA…PFHI, PVSG…YGFL, ILPA…VIAI, IAYS…THTI, VAAV…FIAV, FSMP…MAIP, IVIG…SLYL, and IAIS…SLII.

The protein belongs to the complex I subunit 4 family.

Its subcellular location is the mitochondrion membrane. It carries out the reaction a ubiquinone + NADH + 5 H(+)(in) = a ubiquinol + NAD(+) + 4 H(+)(out). Its function is as follows. Core subunit of the mitochondrial membrane respiratory chain NADH dehydrogenase (Complex I) that is believed to belong to the minimal assembly required for catalysis. Complex I functions in the transfer of electrons from NADH to the respiratory chain. The immediate electron acceptor for the enzyme is believed to be ubiquinone. This Metridium senile (Brown sea anemone) protein is NADH-ubiquinone oxidoreductase chain 4 (ND4).